Here is a 389-residue protein sequence, read N- to C-terminus: (+)-bicyclogermacrene synthase TS4 (389 aa).

5 residues coordinate Mg(2+): Asp136, Glu140, His284, Gly288, and Asp292. Positions 136-140 match the DDxx(x)D/E motif motif; sequence DEVCE. The NDxxSxxxD/E motif signature appears at 284 to 292; it reads HDFIGLQKD.

Belongs to the terpene synthase family.

It carries out the reaction (2E,6E)-farnesyl diphosphate = bicyclogermacrene + diphosphate. Functionally, catalyzes the cyclization of trans,trans-farnesyl diphosphate (FPP) to the bicyclic sesquiterpene bicyclogermacrene. The chain is (+)-bicyclogermacrene synthase TS4 from Penicillium expansum (Blue mold rot fungus).